The chain runs to 604 residues: Serine protease 56 (604 aa).

Positions 1–22 (MPLAMLLLLLLLLSPDSQTAHG) are cleaved as a signal peptide. Positions 70 to 94 (CQGPGRPRPQAPLLQDPPEPVQCGE) are disordered. Positions 75-89 (RPRPQAPLLQDPPEP) are enriched in pro residues. Asn101 is a glycosylation site (N-linked (GlcNAc...) asparagine). The Peptidase S1 domain occupies 109–341 (IVGGSTAPSG…FKDWLQEQMS (233 aa)). An intrachain disulfide couples Cys134 to Cys150. Catalysis depends on charge relay system residues His149 and Asp195. Disulfide bonds link Cys229/Cys296, Cys260/Cys275, and Cys286/Cys317. The active-site Charge relay system is the Ser290. Disordered stretches follow at residues 424–452 (RPGL…PREQ) and 578–604 (PQAP…PPVP).

Belongs to the peptidase S1 family. Expressed in the eye: present in the retina and in the optic nerve.

It localises to the endoplasmic reticulum membrane. Its function is as follows. Serine protease required during eye development. In Mus musculus (Mouse), this protein is Serine protease 56 (Prss56).